Here is a 266-residue protein sequence, read N- to C-terminus: Interleukin-1 beta (266 aa).

The propeptide occupies 1-113; that stretch reads MATVPEPINE…ETSSDELLCD (113 aa).

Belongs to the IL-1 family. As to quaternary structure, monomer. In its precursor form, weakly interacts with full-length MEFV; the mature cytokine does not interact at all. Interacts with integrins ITGAV:ITGBV and ITGA5:ITGB1; integrin-binding is required for IL1B signaling. Interacts with cargo receptor TMED10; the interaction is direct and is required for the secretion of IL1B mature form. Interacts with HSP90AB1; the interaction facilitates cargo translocation into the ERGIC. Interacts with HSP90B1; the interaction facilitates cargo translocation into the ERGIC.

It localises to the cytoplasm. It is found in the cytosol. The protein localises to the secreted. Its subcellular location is the lysosome. The protein resides in the extracellular exosome. Functionally, potent pro-inflammatory cytokine. Initially discovered as the major endogenous pyrogen, induces prostaglandin synthesis, neutrophil influx and activation, T-cell activation and cytokine production, B-cell activation and antibody production, and fibroblast proliferation and collagen production. Promotes Th17 differentiation of T-cells. Synergizes with IL12/interleukin-12 to induce IFNG synthesis from T-helper 1 (Th1) cells. Plays a role in angiogenesis by inducing VEGF production synergistically with TNF and IL6. Involved in transduction of inflammation downstream of pyroptosis: its mature form is specifically released in the extracellular milieu by passing through the gasdermin-D (GSDMD) pore. The polypeptide is Interleukin-1 beta (IL1B) (Ovis aries (Sheep)).